The sequence spans 55 residues: UPF0391 membrane protein RSp1666 (55 aa).

Helical transmembrane passes span 5 to 25 (AVIF…GIAA) and 33 to 53 (ILFM…LVAG).

This sequence belongs to the UPF0391 family.

The protein localises to the cell membrane. This Ralstonia nicotianae (strain ATCC BAA-1114 / GMI1000) (Ralstonia solanacearum) protein is UPF0391 membrane protein RSp1666.